A 180-amino-acid chain; its full sequence is Type-1 fimbrial protein subunit (180 aa).

Positions M1–A22 are cleaved as a signal peptide. Cysteines 38 and 78 form a disulfide.

It belongs to the fimbrial protein family.

It localises to the fimbrium. Fimbriae (also called pili), polar filaments radiating from the surface of the bacterium to a length of 0.5-1.5 micrometers and numbering 100-300 per cell, enable bacteria to colonize the epithelium of specific host organs. The polypeptide is Type-1 fimbrial protein subunit (fimA) (Serratia marcescens).